Here is a 114-residue protein sequence, read N- to C-terminus: uncharacterized protein (114 aa).

This is an uncharacterized protein from Saccharomyces cerevisiae (strain ATCC 204508 / S288c) (Baker's yeast).